Reading from the N-terminus, the 148-residue chain is Putative HTH-type transcriptional regulator NMA1593 (148 aa).

The HTH rrf2-type domain occupies 2-131 (RLTTKGRFAV…GSVTLQSIIE (130 aa)).

This Neisseria meningitidis serogroup A / serotype 4A (strain DSM 15465 / Z2491) protein is Putative HTH-type transcriptional regulator NMA1593.